A 284-amino-acid chain; its full sequence is Undecaprenyl-diphosphatase (284 aa).

8 helical membrane-spanning segments follow: residues 1-21 (MNWLHAIILGIVEGITEFLPV), 43-63 (ITAFTAIIQVGAIIAAILYFW), 88-108 (YTLGWGIILGSIPVGVVGLVF), 116-136 (LSSLWVVAIALILWSGVMWLG), 149-169 (IGIVDAIVIGCFQALAPLFPG), 193-213 (LSFFMGIPALVAAGIYESVSA), 225-245 (VAIGWGPTILATVVSLIVAYV), and 259-279 (FTGFMWYRVVVGLIIIGLILS).

Belongs to the UppP family.

The protein localises to the cell membrane. It catalyses the reaction di-trans,octa-cis-undecaprenyl diphosphate + H2O = di-trans,octa-cis-undecaprenyl phosphate + phosphate + H(+). Functionally, catalyzes the dephosphorylation of undecaprenyl diphosphate (UPP). Confers resistance to bacitracin. This is Undecaprenyl-diphosphatase from Cutibacterium acnes (strain DSM 16379 / KPA171202) (Propionibacterium acnes).